The following is a 7968-amino-acid chain: Obscurin (7968 aa).

Ig-like domains are found at residues 10–100 (PRFL…LQVD), 110–202 (PHFL…LVVD), 236–322 (PASP…QTYS), 331–414 (PAVP…RTVA), and 420–508 (GNLL…VSAP). A disulfide bridge links C31 with C82. Residues 228–249 (EAMRAEGAPASPPSTGTRTCTV) are disordered. A compositionally biased stretch (polar residues) spans 240-249 (PSTGTRTCTV). Disulfide bonds link C259–C311 and C354–C404. Position 395 is a phosphoserine (S395). One can recognise a Fibronectin type-III 1 domain in the interval 515–612 (PPVDPVVKAR…FPGTVHLAPK (98 aa)). Ig-like domains are found at residues 619–698 (LKAV…MEVR), 701–790 (PGLT…YQLS), 798–884 (LHKD…LRVS), 886–977 (PKVV…DVKE), 978–1066 (PKVV…FRLH), 1070–1161 (PKMM…HITE), 1162–1252 (PKGV…LHIT), 1254–1345 (PKAV…DVSE), 1346–1432 (PKAV…LSFS), 1438–1524 (PKVV…LSFH), 1530–1621 (PKAV…HVAE), and 1622–1719 (PKVV…PQIS). 12 disulfides stabilise this stretch: C819–C870, C912–C962, C1004–C1054, C1096–C1146, C1188–C1238, C1280–C1330, C1372–C1422, C1464–C1514, C1556–C1606, C1648–C1698, C1723–C1791, and C1830–C1880. Positions 1731-1808 (KEHEDIILTA…DFPVQVEEVA (78 aa)) constitute a Fibronectin type-III 2 domain. Ig-like domains are found at residues 1809–1894 (AKFC…LTVS), 1896–1982 (PRVV…AALR), 1987–2071 (PVLF…AKLT), 2077–2162 (VRLV…LVVT), 2165–2249 (PVSF…ASVK), 2289–2380 (PVTL…QSIT), 2468–2559 (PVVL…REVT), 2564–2643 (LQDA…LEVR), 2646–2730 (PVVF…ARVR), 2736–2823 (VGIT…LIVR), 2826–2908 (PAAI…STAS), 2920–2999 (EELT…AQLL), 3003–3092 (RRVH…LRVT), 3095–3183 (PSVF…VHAR), 3184–3268 (PVRF…ATLT), 3273–3356 (PAQF…ASLT), 3359–3444 (PMPA…ATLT), 3449–3532 (PAKF…ATLT), 3537–3620 (PARF…AMLT), 3625–3708 (PIKF…AMLT), 3713–3796 (PSKF…ATLT), 3801–3884 (PARF…ATLT), 3890–3973 (PVFR…ATLT), 3978–4062 (PVRF…ASLS), 4068–4160 (PKFK…PEVT), 4171–4239 (TADE…NHAS), 4248–4337 (PEVT…LKVT), 4340–4427 (NTVV…FLTV), and 4430–4518 (WRLE…ARLT). Cystine bridges form between C2187–C2237, C2311–C2361, and C2490–C2540. The cysteines at positions 2668 and 2718 are disulfide-linked. 2 cysteine pairs are disulfide-bonded: C2848–C2898 and C2937–C2987. A Phosphoserine modification is found at S2889. 12 cysteine pairs are disulfide-bonded: C3117–C3167, C3206–C3256, C3295–C3344, C3383–C3432, C3471–C3520, C3559–C3608, C3647–C3696, C3735–C3784, C3823–C3872, C3911–C3961, C4000–C4050, and C4089–C4141. Residue S4015 is modified to Phosphoserine. C4453 and C4508 form a disulfide bridge. The Fibronectin type-III 3 domain occupies 4525-4619 (PPEDAEVVAR…LPQTVRLAEP (95 aa)). Residues 4624–4714 (PPQPSAPESR…AAATFQVALS (91 aa)) form the Ig-like 47 domain. Residues 4749–4785 (MSREPTLDSISELPEEDGRSQRLPQEAEEVAPDLSEG) are disordered. S4750 carries the post-translational modification Phosphoserine. T4754 carries the phosphothreonine modification. S4757 bears the Phosphoserine mark. T4788 carries the post-translational modification Phosphothreonine. At S4805 the chain carries Phosphoserine. The tract at residues 4820 to 4860 (LKKAGRPGTSPLASKVGAPAAPSVKPQQQQEPLAAVRPPLG) is disordered. In terms of domain architecture, IQ spans 4872–4901 (MDKAAVKIQAAFKGYKVRKEMKQQEGPMFS). 2 consecutive Ig-like domains span residues 4898-4989 (PMFS…VVVS) and 5126-5215 (PVFL…AELR). 2 cysteine pairs are disulfide-bonded: C4919/C4971 and C5147/C5199. Residues 5238–5256 (AQGYLSSREQEGTESTTDE) are compositionally biased toward polar residues. Residues 5238–5257 (AQGYLSSREQEGTESTTDEG) form a disordered region. Ig-like domains are found at residues 5260–5349 (PQVV…ARLL) and 5371–5467 (PRML…LHVS). The interval 5554–5596 (AKLQVPGGDSDEDSKTPSASPRHGRSRPSSSIQESSSESEDGD) is disordered. S5563 carries the post-translational modification Phosphoserine. T5569 carries the phosphothreonine modification. Over residues 5570–5589 (PSASPRHGRSRPSSSIQESS) the composition is skewed to low complexity. A phosphoserine mark is found at S5571 and S5573. The SH3 domain occupies 5600-5667 (EIFDIYVVTA…SPAYLDRRLK (68 aa)). One can recognise a DH domain in the interval 5693 to 5877 (RLSSVIQELL…SALPQRAENK (185 aa)). The PH domain maps to 5895–6004 (EPIRQGHFIV…WVKEICGIQQ (110 aa)). R5975 lines the a 1,2-diacyl-sn-glycero-3-phospho-(1D-myo-inositol-4,5-bisphosphate) pocket. R5980 contributes to the a 1,2-diacyl-sn-glycero-3-phospho-(1D-myo-inositol-3,4-bisphosphate) binding site. Ig-like domains lie at 6014–6097 (PDFE…GNCS) and 6108–6200 (PRFV…LRIQ). Disulfide bonds link C6035/C6087 and C6129/C6182. Residues 6237–6296 (RLLGPKAPGPSTGDLTGPGPCPRGAPALQETGSQPPVTGTSEAPAVPPRVPQPLLHEGPE) are disordered. Polar residues predominate over residues 6266-6277 (ETGSQPPVTGTS). The 89-residue stretch at 6357 to 6445 (PSMQVTIEDV…GQVLCKAELL (89 aa)) folds into the Ig-like 54 domain. In terms of domain architecture, Protein kinase 1 spans 6468–6721 (YEVKEEIGRG…AAQCLSHPWF (254 aa)). Residues 6474–6482 (IGRGVFGFV) and K6497 contribute to the ATP site. The active-site Proton acceptor is D6587. 3 disordered regions span residues 6777–6863 (GVAR…AQGC), 6952–7176 (SGTH…TMRK), and 7217–7272 (VSQS…TPWE). Phosphoserine is present on S6831. A compositionally biased stretch (pro residues) spans 7052–7061 (AVAPCPPGSF). The span at 7115-7139 (SSPGSASQASSSQVSSLRVGSSQVG) shows a compositional bias: low complexity. The span at 7160–7172 (DSTPTLQRPQEQA) shows a compositional bias: polar residues. Over residues 7227–7242 (EARAESQSEEQQEARA) the composition is skewed to basic and acidic residues. Residue S7244 is modified to Phosphoserine. The region spanning 7463–7552 (PTFLRELSDE…GTVTTTGVLR (90 aa)) is the Ig-like 55 domain. C7484 and C7536 are joined by a disulfide. One can recognise a Fibronectin type-III 4 domain in the interval 7557–7649 (PSSSPCPDIG…PSEQVLLGGP (93 aa)). The Protein kinase 2 domain occupies 7672 to 7924 (FAFQTQIQRG…ASSCLQCPWL (253 aa)). ATP-binding positions include 7678 to 7686 (IQRGRFSVV) and K7701. D7791 acts as the Proton acceptor in catalysis.

It belongs to the protein kinase superfamily. CAMK Ser/Thr protein kinase family. Interacts (via protein kinase domain 2) with CDH2 and (via protein kinase domain 1) with ATP1B1. Isoform 3 interacts with TTN/titin and calmodulin. Isoform 3 interacts with ANK1 isoform Mu17/ank1.5. Mg(2+) is required as a cofactor. In terms of processing, autophosphorylated by protein kinase domains 1 and 2.

The protein resides in the cytoplasm. The protein localises to the myofibril. Its subcellular location is the sarcomere. It is found in the m line. It localises to the z line. The protein resides in the cell membrane. The protein localises to the sarcolemma. Its subcellular location is the nucleus. The catalysed reaction is L-seryl-[protein] + ATP = O-phospho-L-seryl-[protein] + ADP + H(+). It catalyses the reaction L-threonyl-[protein] + ATP = O-phospho-L-threonyl-[protein] + ADP + H(+). Functionally, structural component of striated muscles which plays a role in myofibrillogenesis. Probably involved in the assembly of myosin into sarcomeric A bands in striated muscle. Has serine/threonine protein kinase activity and phosphorylates N-cadherin CDH2 and sodium/potassium-transporting ATPase subunit ATP1B1. Binds (via the PH domain) strongly to phosphatidylinositol 3,4-bisphosphate (PtdIns(3,4)P2) and phosphatidylinositol 4,5-bisphosphate (PtdIns(4,5)P2), and to a lesser extent to phosphatidylinositol 3-phosphate (PtdIns(3)P), phosphatidylinositol 4-phosphate (PtdIns(4)P), phosphatidylinositol 5-phosphate (PtdIns(5)P) and phosphatidylinositol 3,4,5-trisphosphate (PtdIns(3,4,5)P3). This is Obscurin (OBSCN) from Homo sapiens (Human).